The chain runs to 560 residues: 2-succinylbenzoate--CoA ligase, chloroplastic/peroxisomal (560 aa).

The N-terminal 15 residues, 1 to 15, are a transit peptide targeting the chloroplast; that stretch reads MANHSRPHICQCLTR. The next 3 membrane-spanning stretches (helical) occupy residues 69 to 89, 189 to 209, and 225 to 245; these read LFLE…PLNY, GVTI…AIAG, and IGGL…VLLP. Positions 558-560 match the Microbody targeting signal motif; sequence SSL.

Belongs to the ATP-dependent AMP-binding enzyme family. MenE subfamily. High expression in young leaves and flowers. Not expressed in roots.

The protein resides in the plastid. It is found in the chloroplast membrane. The protein localises to the peroxisome membrane. It carries out the reaction 2-succinylbenzoate + ATP + CoA = 2-succinylbenzoyl-CoA + AMP + diphosphate. Involved in the biosynthesis of phylloquinone (vitamin K1). Converts 2-succinylbenzoate (OSB) to 2-succinylbenzoyl-CoA (OSB-CoA). The polypeptide is 2-succinylbenzoate--CoA ligase, chloroplastic/peroxisomal (AAE14) (Arabidopsis thaliana (Mouse-ear cress)).